Consider the following 513-residue polypeptide: ATP synthase subunit alpha (513 aa).

Residue 169–176 coordinates ATP; the sequence is GDRQVGKT.

Belongs to the ATPase alpha/beta chains family. F-type ATPases have 2 components, CF(1) - the catalytic core - and CF(0) - the membrane proton channel. CF(1) has five subunits: alpha(3), beta(3), gamma(1), delta(1), epsilon(1). CF(0) has three main subunits: a(1), b(2) and c(9-12). The alpha and beta chains form an alternating ring which encloses part of the gamma chain. CF(1) is attached to CF(0) by a central stalk formed by the gamma and epsilon chains, while a peripheral stalk is formed by the delta and b chains.

The protein resides in the cell inner membrane. The catalysed reaction is ATP + H2O + 4 H(+)(in) = ADP + phosphate + 5 H(+)(out). Its function is as follows. Produces ATP from ADP in the presence of a proton gradient across the membrane. The alpha chain is a regulatory subunit. This Aeromonas hydrophila subsp. hydrophila (strain ATCC 7966 / DSM 30187 / BCRC 13018 / CCUG 14551 / JCM 1027 / KCTC 2358 / NCIMB 9240 / NCTC 8049) protein is ATP synthase subunit alpha.